A 29-amino-acid chain; its full sequence is Protamine-like protein (29 aa).

The interval 1 to 29 (MRSFDQGSTRAPARERCRRQRPEGRSAQR) is disordered. Positions 12–29 (PARERCRRQRPEGRSAQR) are enriched in basic and acidic residues.

The polypeptide is Protamine-like protein (tpr) (Escherichia coli (strain K12)).